We begin with the raw amino-acid sequence, 279 residues long: MNLKIKYYLELIRVKNCLTASFGTIIGGLIASNFNFGLIGYILLASLIVFLVCGFGNALNDIQDIEIDKINKPNRPLPSNKISLKSATIFSYLLMISGIIISLFNMICFAIALINSIVLYLYAKKYKRNKIIGNLIVAYLTGSIFIFGGASVGNVEITLILFLCALFATWSREIIKDYEDLDGDKSEGVISLPIKYGKNSIFVAIGFLLCSILLSPLPYILGMFGAPYLMAIMICNVLFILAVLKLLKNPSKEIAGSSSKYIKIIMNLVLLSFVIGSLM.

Helical transmembrane passes span 14–34, 36–56, 94–114, 131–153, 157–175, 201–221, 224–244, and 259–279; these read VKNC…ASNF, FGLI…CGFG, LMIS…IALI, IIGN…ASVG, ITLI…REII, IFVA…PYIL, FGAP…LAVL, and SKYI…GSLM.

It belongs to the UbiA prenyltransferase family. DGGGP synthase subfamily. It depends on Mg(2+) as a cofactor.

The protein localises to the cell membrane. The enzyme catalyses sn-3-O-(geranylgeranyl)glycerol 1-phosphate + (2E,6E,10E)-geranylgeranyl diphosphate = 2,3-bis-O-(geranylgeranyl)-sn-glycerol 1-phosphate + diphosphate. It participates in membrane lipid metabolism; glycerophospholipid metabolism. Functionally, prenyltransferase that catalyzes the transfer of the geranylgeranyl moiety of geranylgeranyl diphosphate (GGPP) to the C2 hydroxyl of (S)-3-O-geranylgeranylglyceryl phosphate (GGGP). This reaction is the second ether-bond-formation step in the biosynthesis of archaeal membrane lipids. The chain is Digeranylgeranylglyceryl phosphate synthase from Methanococcus aeolicus (strain ATCC BAA-1280 / DSM 17508 / OCM 812 / Nankai-3).